A 793-amino-acid polypeptide reads, in one-letter code: Cation channel sperm-associated auxiliary subunit delta (793 aa).

Positions 1–20 (MLMLMLVAAVTMWLRPLVTA) are cleaved as a signal peptide. The Extracellular portion of the chain corresponds to 21-725 (QPLCRARTVR…AFPVQLVSAG (705 aa)). Intrachain disulfides connect Cys-24–Cys-370, Cys-60–Cys-146, Cys-145–Cys-153, Cys-388–Cys-497, Cys-511–Cys-703, Cys-526–Cys-573, and Cys-625–Cys-653. Residue Asn-128 is glycosylated (N-linked (GlcNAc...) asparagine). N-linked (GlcNAc...) asparagine glycans are attached at residues Asn-231, Asn-241, Asn-473, Asn-539, and Asn-631. The chain crosses the membrane as a helical span at residues 726–747 (VVMVLLISSILGSVWLAYMIPR). The Cytoplasmic portion of the chain corresponds to 748-793 (LLRTARGRRMTSFVAQLYGRCKTVCQFRASATARTGSKPMGRHRSS).

It belongs to the CATSPERD family. In terms of assembly, component of the CatSper complex or CatSpermasome composed of the core pore-forming members CATSPER1, CATSPER2, CATSPER3 and CATSPER4 as well as auxiliary members CATSPERB, CATSPERG, CATSPERD, CATSPERE, CATSPERZ, C2CD6/CATSPERT, TMEM249, TMEM262 and EFCAB9. HSPA1 may be an additional auxiliary complex member. The core complex members CATSPER1, CATSPER2, CATSPER3 and CATSPER4 form a heterotetrameric channel. The auxiliary CATSPERB, CATSPERG, CATSPERD and CATSPERE subunits form a pavilion-like structure over the pore which stabilizes the complex through interactions with CATSPER4, CATSPER3, CATSPER1 and CATSPER2 respectively. TMEM262/CATSPERH interacts with CATSPERB, further stabilizing the complex. C2CD6/CATSPERT interacts at least with CATSPERD and is required for targeting the CatSper complex in the flagellar membrane.

The protein resides in the cell projection. It is found in the cilium. Its subcellular location is the flagellum membrane. Auxiliary component of the CatSper complex, a complex involved in sperm cell hyperactivation. Sperm cell hyperactivation is needed for sperm motility which is essential late in the preparation of sperm for fertilization. Required for CATSPER1 stability before intraflagellar transport and/or incorporation of the CatSper complex channel into the flagellar membrane. This is Cation channel sperm-associated auxiliary subunit delta from Macaca fascicularis (Crab-eating macaque).